Reading from the N-terminus, the 284-residue chain is Efem/EfeO family lipoprotein (284 aa).

A signal peptide spans Met1–Ala17. The N-palmitoyl cysteine moiety is linked to residue Cys18. A lipid anchor (S-diacylglycerol cysteine) is attached at Cys18.

It belongs to the EfeM/EfeO family.

It is found in the cell membrane. This is Efem/EfeO family lipoprotein from Staphylococcus aureus (strain MSSA476).